A 158-amino-acid polypeptide reads, in one-letter code: Serine-protein kinase RsbW (158 aa).

The protein belongs to the anti-sigma-factor family.

It catalyses the reaction L-seryl-[protein] + ATP = O-phospho-L-seryl-[protein] + ADP + H(+). The enzyme catalyses L-threonyl-[protein] + ATP = O-phospho-L-threonyl-[protein] + ADP + H(+). Negative regulator of sigma-B activity. Phosphorylates and inactivates its specific antagonist protein, RsbV. Upon phosphorylation of RsbV, RsbW is released and binds to sigma-B, thereby blocking its ability to form an RNA polymerase holoenzyme (E-sigma-B). This chain is Serine-protein kinase RsbW, found in Oceanobacillus iheyensis (strain DSM 14371 / CIP 107618 / JCM 11309 / KCTC 3954 / HTE831).